The chain runs to 257 residues: MSDILEKIAAYKRDEVAVRKAAQPTIAPPAEAPRGFRAALTRAHAPGRLALIAEIKKASPSKGLIREDFDPPALARAYEAGGAACLSVLTDGPSFQGDDSYLAAARSAVRLPCLRKEFLVDPWQVAESRSLGADAILVILAMVDDVLAAELMAEAQRLGMDALVEVHDEAEMARAGALGADLIGVNNRNLRTFEVDLSTTERLATMAPAGALLVTESGIFTPADVARLERCGAQAMLVGESLMRQADVTAATRALLG.

It belongs to the TrpC family.

The enzyme catalyses 1-(2-carboxyphenylamino)-1-deoxy-D-ribulose 5-phosphate + H(+) = (1S,2R)-1-C-(indol-3-yl)glycerol 3-phosphate + CO2 + H2O. It functions in the pathway amino-acid biosynthesis; L-tryptophan biosynthesis; L-tryptophan from chorismate: step 4/5. The chain is Indole-3-glycerol phosphate synthase from Phenylobacterium zucineum (strain HLK1).